The chain runs to 839 residues: MAQFDTEYQRLEASYSDSPPGEEDLLVHVAEGSKSPWHHIENLDLFFSRVYNLHQKNGFTCMLIGEIFELMQFLFVVAFTTFLVSCVDYDILFANKMVNHSLHPTEPVKVTLPDAFLPAQVCSARIQENGSLITILVIAGVFWIHRLIKFIYNICCYWEIHSFYLHALRIPMSALPYCTWQEVQARIVQTQKEHQICIHKRELTELDIYHRILRFQNYMVALVNKSLLPLRFRLPGLGEAVFFTRGLKYNFELILFWGPGSLFLNEWSLKAEYKRGGQRLELAQRLSNRILWIGIANFLLCPLILIWQILYAFFSYAEVLKREPGALGARCWSLYGRCYLRHFNELEHELQSRLNRGYKPASKYMNCFLSPLLTLLAKNGAFFAGSILAVLIALTIYDEDVLAVEHVLTTVTLLGVTVTVCRSFIPDQHMVFCPEQLLRVILAHIHYMPDHWQGNAHRSQTRDEFAQLFQYKAVFILEELLSPIVTPLILIFCLRPRALEIIDFFRNFTVEVVGVGDTCSFAQMDVRQHGHPQWLSAGQTEASVYQQAEDGKTELSLMHFAITNPGWQPPRESTAFLGFLKEQVQRDGAAASLAQGGLLPENALFTSIQSLQSESEPLSLIANVVAGSSCRGPPLPRDLQGSRHRAEVASALRSFSPLQPGQAPTGRAHSTMTGSGVDARTASSGSSVWEGQLQSLVLSEYASTEMSLHALYMHQLHKQQAQAEPERHLWHRRESDESGESAPDEGGEGARAPQSIPRSASYPCAAPRPGAPETTALHGGFQRRYGGITDPGTVPRAPSHFSRLPLGGWAEDGQSASRHPEPVPEEGSEDELPPQVHKV.

The disordered stretch occupies residues 1 to 20; the sequence is MAQFDTEYQRLEASYSDSPP. Ala2 carries the N-acetylalanine modification. Residues 2 to 61 lie on the Cytoplasmic side of the membrane; that stretch reads AQFDTEYQRLEASYSDSPPGEEDLLVHVAEGSKSPWHHIENLDLFFSRVYNLHQKNGFTC. Residues 8 to 11 carry the Tyrosine-based sorting signal motif; that stretch reads YQRL. A phosphoserine mark is found at Ser14, Ser16, and Ser18. Residues 62 to 84 form a helical membrane-spanning segment; it reads MLIGEIFELMQFLFVVAFTTFLV. Over 85–128 the chain is Lumenal; sequence SCVDYDILFANKMVNHSLHPTEPVKVTLPDAFLPAQVCSARIQE. N-linked (GlcNAc...) asparagine glycosylation is present at Asn99. A helical transmembrane segment spans residues 129-154; sequence NGSLITILVIAGVFWIHRLIKFIYNI. The Cytoplasmic portion of the chain corresponds to 155–290; sequence CCYWEIHSFY…ELAQRLSNRI (136 aa). Residues 291-301 lie within the membrane without spanning it; it reads LWIGIANFLLC. The Cytoplasmic segment spans residues 302–319; sequence PLILIWQILYAFFSYAEV. The stretch at 320-328 is an intramembrane region; it reads LKREPGALG. Over 329 to 371 the chain is Cytoplasmic; the sequence is ARCWSLYGRCYLRHFNELEHELQSRLNRGYKPASKYMNCFLSP. A helical transmembrane segment spans residues 372 to 397; the sequence is LLTLLAKNGAFFAGSILAVLIALTIY. The Lumenal segment spans residues 398-406; it reads DEDVLAVEH. The chain crosses the membrane as a helical span at residues 407–424; that stretch reads VLTTVTLLGVTVTVCRSF. Residues 425-470 lie on the Cytoplasmic side of the membrane; the sequence is IPDQHMVFCPEQLLRVILAHIHYMPDHWQGNAHRSQTRDEFAQLFQ. Residues 471–480 lie within the membrane without spanning it; it reads YKAVFILEEL. The Cytoplasmic portion of the chain corresponds to 481 to 483; it reads LSP. Residues 484–492 lie within the membrane without spanning it; the sequence is IVTPLILIF. Over 493–839 the chain is Cytoplasmic; that stretch reads CLRPRALEII…DELPPQVHKV (347 aa). A phosphoserine mark is found at Ser656, Ser735, Ser738, Ser741, and Ser828. Disordered regions lie at residues 656-686 and 719-839; these read SPLQ…SSGS and QQAQ…VHKV. A compositionally biased stretch (basic and acidic residues) spans 724–736; that stretch reads EPERHLWHRRESD. Composition is skewed to acidic residues over residues 737 to 747 and 823 to 832; these read ESGESAPDEGG and VPEEGSEDEL.

This sequence belongs to the ATG9 family. In terms of assembly, homotrimer; forms a homotrimer with a central pore that forms a path between the two membrane leaflets. Interacts (via cytoplasmic its C-terminus) with ATG2A. Interacts with SUPT20H. Interacts (via the tyrosine-based sorting signal motif) with AP4M1; promoting association with the AP-4 complex. Interacts with ARFIP1 and ARFIP2. Interacts with PI4K2A and PI4KB. Interacts with ATG4A; the interaction is direct and promotes ATG9A trafficking. In terms of processing, ufmylated in a DDRGK1 dependent manner.

The protein localises to the preautophagosomal structure membrane. It is found in the cytoplasmic vesicle. Its subcellular location is the autophagosome membrane. The protein resides in the golgi apparatus. It localises to the trans-Golgi network membrane. The protein localises to the late endosome membrane. It is found in the recycling endosome membrane. Its subcellular location is the endoplasmic reticulum membrane. The protein resides in the mitochondrion membrane. It carries out the reaction a 1,2-diacyl-sn-glycero-3-phosphocholine(in) = a 1,2-diacyl-sn-glycero-3-phosphocholine(out). It catalyses the reaction a 1,2-diacyl-sn-glycero-3-phospho-L-serine(in) = a 1,2-diacyl-sn-glycero-3-phospho-L-serine(out). The catalysed reaction is a 1,2-diacyl-sn-glycero-3-phosphoethanolamine(in) = a 1,2-diacyl-sn-glycero-3-phosphoethanolamine(out). In terms of biological role, phospholipid scramblase involved in autophagy by mediating autophagosomal membrane expansion. Cycles between the preautophagosomal structure/phagophore assembly site (PAS) and the cytoplasmic vesicle pool and supplies membrane for the growing autophagosome. Lipid scramblase activity plays a key role in preautophagosomal structure/phagophore assembly by distributing the phospholipids that arrive through ATG2 (ATG2A or ATG2B) from the cytoplasmic to the luminal leaflet of the bilayer, thereby driving autophagosomal membrane expansion. Also required to supply phosphatidylinositol 4-phosphate to the autophagosome initiation site by recruiting the phosphatidylinositol 4-kinase beta (PI4KB) in a process dependent on ARFIP2, but not ARFIP1. In addition to autophagy, also plays a role in necrotic cell death. This Pongo abelii (Sumatran orangutan) protein is Autophagy-related protein 9A.